Reading from the N-terminus, the 100-residue chain is Urease subunit gamma (100 aa).

Belongs to the urease gamma subunit family. In terms of assembly, heterotrimer of UreA (gamma), UreB (beta) and UreC (alpha) subunits. Three heterotrimers associate to form the active enzyme.

Its subcellular location is the cytoplasm. The catalysed reaction is urea + 2 H2O + H(+) = hydrogencarbonate + 2 NH4(+). Its pathway is nitrogen metabolism; urea degradation; CO(2) and NH(3) from urea (urease route): step 1/1. In Klebsiella pneumoniae, this protein is Urease subunit gamma.